A 66-amino-acid polypeptide reads, in one-letter code: Cold shock-like protein CspD (66 aa).

Residues 4-63 (GKVKWFNSEKGFGFIEVEGGDDVFVHFSAIQGDGFKTLEEGQEVSFEIVEGNRGPQAANV) form the CSD domain.

As to quaternary structure, homodimer.

Its subcellular location is the cytoplasm. In Bacillus anthracis, this protein is Cold shock-like protein CspD (cspD).